The following is a 142-amino-acid chain: Large ribosomal subunit protein uL11 (142 aa).

It belongs to the universal ribosomal protein uL11 family. As to quaternary structure, part of the ribosomal stalk of the 50S ribosomal subunit. Interacts with L10 and the large rRNA to form the base of the stalk. L10 forms an elongated spine to which L12 dimers bind in a sequential fashion forming a multimeric L10(L12)X complex. Post-translationally, one or more lysine residues are methylated.

Its function is as follows. Forms part of the ribosomal stalk which helps the ribosome interact with GTP-bound translation factors. The polypeptide is Large ribosomal subunit protein uL11 (Dictyoglomus turgidum (strain DSM 6724 / Z-1310)).